Here is a 564-residue protein sequence, read N- to C-terminus: MDEKQLVSQALSAAIDGVLGVEQIAAIIEKPKSSDLGDLAFPAFQLAKTLRKSPQIIAGEIAEKIDTKGFEKVIAVGPYVNFFLDKNATASEVIREVLAEGEHYGDANIGEGGNVPIDMSAPNIAKPFSIGHLRSTVIGDSIAKIYEKLGYQPIKINHLGDWGKQFGLLITAYKKYGDEATITANPIDELLKLYVKINAEAKEDSEVDEEGRQWFLKMEQGDEEALRIWKWFSDVSLIEFNRIYGKLGVTFDHFMGESFYSDKMDAIVEDLENKNLLHESKGALIVDLEKYNLNPALIKKTDGATLYITRDLATAAYRKKTFNFVKSLYVVGGEQTNHFKQLKAVLKEAGYDWSDDMVHVPFGMVTQGGKKFSTRKGHVVKLEMALDEAVDRAEKQIEAKNPNLENKEEVAKQVGVGAVKFYDLKTDRNNGYDFDLDEMVSFEGETGPYVQYAHARIQSILRKANRKVNIDNISLVVSDAEAWEIVKALKEFPNIVKRAADNYEPSIIAKYAISLAQAFNKYYAHVRILEDDAQLDGRLALISATSIVLKEALRLLGVAAPENM.

The 'HIGH' region signature appears at 122 to 132 (PNIAKPFSIGH).

The protein belongs to the class-I aminoacyl-tRNA synthetase family. Monomer.

It localises to the cytoplasm. The catalysed reaction is tRNA(Arg) + L-arginine + ATP = L-arginyl-tRNA(Arg) + AMP + diphosphate. The chain is Arginine--tRNA ligase from Lactococcus lactis subsp. cremoris (strain MG1363).